A 339-amino-acid polypeptide reads, in one-letter code: Transcription factor IIIA (339 aa).

9 C2H2-type zinc fingers span residues 12–36, 42–66, 72–97, 104–128, 134–158, 161–187, 190–212, 219–244, and 250–274; these read FICS…LCKH, FPCT…VLSH, CKCE…KRAH, YVCY…QYIH, FKCS…EKTH, YPCR…AELH, VTCS…KKIH, YRCP…LTFH, and FVCE…FNTH. The tract at residues 271-339 is disordered; it reads FNTHDPEKKK…LPVLENLTLK (69 aa). The span at 299-309 shows a compositional bias: basic residues; it reads KPKKSKKKKKP. Positions 311–323 are enriched in polar residues; the sequence is QTPAMESQEQQPD.

It localises to the nucleus. Involved in ribosomal large subunit biogenesis. Interacts with the internal control region (ICR) of approximately 50 bases within the 5S RNA genes, is required for correct transcription of these genes by RNA polymerase III. Also binds the transcribed 5S RNA's. This Anaxyrus americanus (American toad) protein is Transcription factor IIIA (gtf3a).